Here is a 287-residue protein sequence, read N- to C-terminus: Movement protein (287 aa).

Belongs to the nucleorhabdovirus type-1 movement protein family.

Transports viral genome to neighboring plant cells directly through plasmosdesmata, without any budding. The movement protein allows efficient cell to cell propagation, by bypassing the host cell wall barrier. This chain is Movement protein (3), found in Colocasia esculenta (Wild taro).